Here is a 903-residue protein sequence, read N- to C-terminus: Alanine--tRNA ligase (903 aa).

4 residues coordinate Zn(2+): His-581, His-585, Cys-693, and His-697.

The protein belongs to the class-II aminoacyl-tRNA synthetase family. The cofactor is Zn(2+).

The protein resides in the cytoplasm. It carries out the reaction tRNA(Ala) + L-alanine + ATP = L-alanyl-tRNA(Ala) + AMP + diphosphate. Functionally, catalyzes the attachment of alanine to tRNA(Ala) in a two-step reaction: alanine is first activated by ATP to form Ala-AMP and then transferred to the acceptor end of tRNA(Ala). Also edits incorrectly charged Ser-tRNA(Ala) and Gly-tRNA(Ala) via its editing domain. This is Alanine--tRNA ligase from Psychrobacter sp. (strain PRwf-1).